Reading from the N-terminus, the 456-residue chain is UDP-N-acetylmuramate--L-alanine ligase (456 aa).

Position 112 to 118 (112 to 118 (GAHGKTT)) interacts with ATP.

The protein belongs to the MurCDEF family.

It localises to the cytoplasm. The catalysed reaction is UDP-N-acetyl-alpha-D-muramate + L-alanine + ATP = UDP-N-acetyl-alpha-D-muramoyl-L-alanine + ADP + phosphate + H(+). It participates in cell wall biogenesis; peptidoglycan biosynthesis. Its function is as follows. Cell wall formation. The polypeptide is UDP-N-acetylmuramate--L-alanine ligase (Desulfatibacillum aliphaticivorans).